The primary structure comprises 406 residues: High mobility group nucleosome-binding domain-containing protein 5 (406 aa).

The interval 1–406 (MPKRKAAGDV…GEKEEPLSIV (406 aa)) is disordered. T29 carries the phosphothreonine modification. Basic residues predominate over residues 35–44 (KRASTSRKTK). Basic and acidic residues-rich tracts occupy residues 63-72 (TKPEDVKDEC), 92-101 (MEAEEVKEQI), 110-126 (GEKK…DELK), 136-159 (EDGK…EGLN), and 166-187 (KSED…KGED). A Glycyl lysine isopeptide (Lys-Gly) (interchain with G-Cter in SUMO2) cross-link involves residue K64. K98 is covalently cross-linked (Glycyl lysine isopeptide (Lys-Gly) (interchain with G-Cter in SUMO1); alternate). K98 is covalently cross-linked (Glycyl lysine isopeptide (Lys-Gly) (interchain with G-Cter in SUMO2); alternate). A Glycyl lysine isopeptide (Lys-Gly) (interchain with G-Cter in SUMO2) cross-link involves residue K121. The span at 188 to 200 (GKEEGDEKEEEKD) shows a compositional bias: acidic residues. Basic and acidic residues-rich tracts occupy residues 201–239 (DKEG…KEGQ), 246–266 (EDLH…KEGQ), 272–284 (KEIH…KEGQ), and 290–311 (KEYL…KEGQ). A compositionally biased stretch (acidic residues) spans 312–325 (PEEDGKEDQPEEDG). Positions 326 to 365 (KEGQCKEDGKEGHHEEGGKEDLHEEDGKEKDGGKEDRKEE) are enriched in basic and acidic residues. Positions 366–376 (GEQEVAVDEGS) are enriched in acidic residues. The segment covering 377–406 (DENKVEAEEEGAENKDFKQDGEKEEPLSIV) has biased composition (basic and acidic residues).

This sequence belongs to the HMGN family. As to expression, expressed in liver, spleen, lung, heart, kidney, muscle and brain (at protein level). Widely expressed with highest levels in submaxillary gland, thymus, kidney and liver and lowest levels in brain, lung, pancreas and eye.

The protein localises to the nucleus. Its function is as follows. Preferentially binds to euchromatin and modulates cellular transcription by counteracting linker histone-mediated chromatin compaction. This chain is High mobility group nucleosome-binding domain-containing protein 5 (Hmgn5), found in Mus musculus (Mouse).